Consider the following 84-residue polypeptide: Large ribosomal subunit protein bL31B (84 aa).

The protein belongs to the bacterial ribosomal protein bL31 family. Type B subfamily. In terms of assembly, part of the 50S ribosomal subunit.

The chain is Large ribosomal subunit protein bL31B from Rhodococcus opacus (strain B4).